We begin with the raw amino-acid sequence, 105 residues long: Large ribosomal subunit protein bL21 (105 aa).

This sequence belongs to the bacterial ribosomal protein bL21 family. In terms of assembly, part of the 50S ribosomal subunit. Contacts protein L20.

Functionally, this protein binds to 23S rRNA in the presence of protein L20. In Desulfatibacillum aliphaticivorans, this protein is Large ribosomal subunit protein bL21.